The sequence spans 234 residues: Preprocaerulein type-4 (234 aa).

An N-terminal signal peptide occupies residues 1–26; it reads MFKGILLCVLFAVLSANPLSQPEGFA. Residues 27 to 73 constitute a propeptide that is removed on maturation; that stretch reads DEEERDVRGLASLLGKALKAALKIGANALGGSPQQREANDERRFADG. A Sulfotyrosine modification is found at Tyr-77. A Phenylalanine amide modification is found at Phe-83. Positions 87-137 are excised as a propeptide; it reads DDEDDVNERDVRGFGSFLGKALKAGLKIGTHFLGGAPQQREANDERRFADG. The residue at position 141 (Tyr-141) is a Sulfotyrosine. Phe-147 carries the post-translational modification Phenylalanine amide. The propeptide occupies 151-152; the sequence is DG. The residue at position 156 (Tyr-156) is a Sulfotyrosine. A Phenylalanine amide modification is found at Phe-162. The propeptide occupies 166–216; sequence DDEDDVHERDVRGFGSFLGKALKAALKIGANALGGSPQQREANDERRFADG. Residues 198–234 are disordered; that stretch reads LGGSPQQREANDERRFADGQQDYTGWMDFGRRNGEDD. Tyr-220 is modified (sulfotyrosine). Phe-226 carries the phenylalanine amide modification. Residues 230–234 constitute a propeptide that is removed on maturation; sequence NGEDD.

Belongs to the gastrin/cholecystokinin family. As to expression, expressed by the skin glands.

The protein resides in the secreted. The pharmacological activities of caerulein are quite similar to the physiological activities of gastrin and related peptides. The sequence is that of Preprocaerulein type-4 from Xenopus borealis (Kenyan clawed frog).